The chain runs to 92 residues: MMKVIPLGERLLIKPIKEEKKTEGGIVLPDSAKEKPMKAEVVAVGKIDDEEKFDIKVGDKVIYSKYAGTEIKIDDEDYIIIDVNDILAKIEE.

This sequence belongs to the GroES chaperonin family. As to quaternary structure, heptamer of 7 subunits arranged in a ring. Interacts with the chaperonin GroEL.

The protein resides in the cytoplasm. In terms of biological role, together with the chaperonin GroEL, plays an essential role in assisting protein folding. The GroEL-GroES system forms a nano-cage that allows encapsulation of the non-native substrate proteins and provides a physical environment optimized to promote and accelerate protein folding. GroES binds to the apical surface of the GroEL ring, thereby capping the opening of the GroEL channel. This Thermotoga petrophila (strain ATCC BAA-488 / DSM 13995 / JCM 10881 / RKU-1) protein is Co-chaperonin GroES.